A 1407-amino-acid chain; its full sequence is DNA-directed RNA polymerase subunit beta' (1407 aa).

The Zn(2+) site is built by Cys70, Cys72, Cys85, and Cys88. Residues Asp460, Asp462, and Asp464 each contribute to the Mg(2+) site. Zn(2+) contacts are provided by Cys814, Cys888, Cys895, and Cys898.

Belongs to the RNA polymerase beta' chain family. The RNAP catalytic core consists of 2 alpha, 1 beta, 1 beta' and 1 omega subunit. When a sigma factor is associated with the core the holoenzyme is formed, which can initiate transcription. Mg(2+) is required as a cofactor. It depends on Zn(2+) as a cofactor.

The enzyme catalyses RNA(n) + a ribonucleoside 5'-triphosphate = RNA(n+1) + diphosphate. Its function is as follows. DNA-dependent RNA polymerase catalyzes the transcription of DNA into RNA using the four ribonucleoside triphosphates as substrates. This is DNA-directed RNA polymerase subunit beta' from Salmonella paratyphi B (strain ATCC BAA-1250 / SPB7).